The chain runs to 142 residues: MNFTVPVQAIQSIWSVGKESDDAIAEACKPPFCIYFSKKTPYTVTNGSNADHGDDEVRQMMRGLLYNSSCISAQGHTPLALYSTAMLYPPMYGSCPQYVKLFDGSGSESVDVISSSYFVATWVLLVVVIILVFIIISFCISN.

Residues Met-1 to Tyr-117 are Virion surface-facing. N-linked (GlcNAc...) asparagine; by host glycosylation occurs at Asn-2. Cys-28 and Cys-33 are disulfide-bonded. Residues Asn-46 and Asn-67 are each glycosylated (N-linked (GlcNAc...) asparagine; by host). Cys-70 and Cys-95 are oxidised to a cystine. The chain crosses the membrane as a helical span at residues Phe-118–Phe-138. At Cys-139–Asn-142 the chain is on the intravirion side.

It belongs to the influenza type C/coronaviruses hemagglutinin-esterase family. In terms of assembly, homodimer. Post-translationally, N-glycosylated.

It localises to the virion membrane. The protein localises to the host cell membrane. The chain is Truncated non-functional hemagglutinin-esterase homolog (HE) from Berne virus (BEV).